Here is a 1122-residue protein sequence, read N- to C-terminus: Adhesin P1 (1122 aa).

A signal peptide spans 1-26; the sequence is MKKLIFKLSVGITPLALIGLGSFGLA. Disordered stretches follow at residues 182 to 208, 244 to 273, and 541 to 562; these read ATGDTSAEGSATPAGGGSSSSAAGGGA, DYNSDQNKIPKPKTLLDSSESSESINGGRT, and GALQNSGNPQPTSTPMPNSNGN. Over residues 195–208 the composition is skewed to gly residues; the sequence is AGGGSSSSAAGGGA. Residues 259–273 are compositionally biased toward polar residues; it reads LDSSESSESINGGRT. Residues 1001-1021 traverse the membrane as a helical segment; it reads AISIPIIIIALALALGLGIGI. The disordered stretch occupies residues 1066-1122; it reads KTPQMLQANKKDGASSPSKPSAPAAKKPAGPTKPSAPGAKPTAPAKPKAPAPTKKIE. A compositionally biased stretch (low complexity) spans 1079–1122; it reads ASSPSKPSAPAAKKPAGPTKPSAPGAKPTAPAKPKAPAPTKKIE.

Belongs to the adhesin P1 family.

The protein resides in the cell membrane. Its function is as follows. Could be involved in cytadherence. The protein is Adhesin P1 (gapA) of Mycoplasmoides gallisepticum (strain R(low / passage 15 / clone 2)) (Mycoplasma gallisepticum).